The chain runs to 199 residues: Large ribosomal subunit protein mL51 (199 aa).

The transit peptide at 1–15 directs the protein to the mitochondrion; the sequence is MNSNSLSRFTSIVRT.

This sequence belongs to the mitochondrion-specific ribosomal protein mL51 family. In terms of assembly, component of the mitochondrial ribosome large subunit (39S) which comprises a 16S rRNA and about 50 distinct proteins.

It localises to the mitochondrion. This Caenorhabditis elegans protein is Large ribosomal subunit protein mL51 (mrpl-51).